Consider the following 85-residue polypeptide: Large ribosomal subunit protein bL27 (85 aa).

It belongs to the bacterial ribosomal protein bL27 family.

This Variovorax paradoxus (strain S110) protein is Large ribosomal subunit protein bL27.